The following is an 804-amino-acid chain: E3 UFM1-protein ligase 1 homolog (804 aa).

N-acetylmethionine is present on methionine 1. The tract at residues 397 to 483 is disordered; the sequence is IHPSSKSSES…VKAQESNNII (87 aa). Residues 400–409 are compositionally biased toward low complexity; that stretch reads SSKSSESTES. Basic and acidic residues predominate over residues 463–475; that stretch reads LDSKAGGKKESVK.

It belongs to the UFL1 family.

E3 UFM1-protein ligase that mediates ufmylation of target proteins. This Arabidopsis thaliana (Mouse-ear cress) protein is E3 UFM1-protein ligase 1 homolog.